A 372-amino-acid chain; its full sequence is 4-hydroxy-3-methylbut-2-en-1-yl diphosphate synthase (flavodoxin) (372 aa).

[4Fe-4S] cluster-binding residues include cysteine 270, cysteine 273, cysteine 305, and glutamate 312.

The protein belongs to the IspG family. The cofactor is [4Fe-4S] cluster.

The enzyme catalyses (2E)-4-hydroxy-3-methylbut-2-enyl diphosphate + oxidized [flavodoxin] + H2O + 2 H(+) = 2-C-methyl-D-erythritol 2,4-cyclic diphosphate + reduced [flavodoxin]. The protein operates within isoprenoid biosynthesis; isopentenyl diphosphate biosynthesis via DXP pathway; isopentenyl diphosphate from 1-deoxy-D-xylulose 5-phosphate: step 5/6. Its function is as follows. Converts 2C-methyl-D-erythritol 2,4-cyclodiphosphate (ME-2,4cPP) into 1-hydroxy-2-methyl-2-(E)-butenyl 4-diphosphate. The protein is 4-hydroxy-3-methylbut-2-en-1-yl diphosphate synthase (flavodoxin) of Salmonella arizonae (strain ATCC BAA-731 / CDC346-86 / RSK2980).